A 545-amino-acid polypeptide reads, in one-letter code: CTP synthase (545 aa).

The amidoligase domain stretch occupies residues 1–265 (MNGIKHIFIT…DKFVIKHLDL (265 aa)). Ser-15 serves as a coordination point for CTP. Ser-15 serves as a coordination point for UTP. Residues 16–21 (SIGKGL) and Asp-73 contribute to the ATP site. Positions 73 and 141 each coordinate Mg(2+). Residues 148–150 (DIE), 188–193 (KTKPTQ), and Lys-224 each bind CTP. UTP contacts are provided by residues 188 to 193 (KTKPTQ) and Lys-224. Residues 290 to 534 (EIAIIGKYTG…VAAALARKEI (245 aa)) form the Glutamine amidotransferase type-1 domain. Residue Gly-349 participates in L-glutamine binding. The active-site Nucleophile; for glutamine hydrolysis is the Cys-376. L-glutamine is bound by residues 377–380 (LGMQ), Glu-400, and Arg-460. Catalysis depends on residues His-507 and Glu-509.

It belongs to the CTP synthase family. In terms of assembly, homotetramer.

The enzyme catalyses UTP + L-glutamine + ATP + H2O = CTP + L-glutamate + ADP + phosphate + 2 H(+). It catalyses the reaction L-glutamine + H2O = L-glutamate + NH4(+). It carries out the reaction UTP + NH4(+) + ATP = CTP + ADP + phosphate + 2 H(+). The protein operates within pyrimidine metabolism; CTP biosynthesis via de novo pathway; CTP from UDP: step 2/2. Allosterically activated by GTP, when glutamine is the substrate; GTP has no effect on the reaction when ammonia is the substrate. The allosteric effector GTP functions by stabilizing the protein conformation that binds the tetrahedral intermediate(s) formed during glutamine hydrolysis. Inhibited by the product CTP, via allosteric rather than competitive inhibition. Its function is as follows. Catalyzes the ATP-dependent amination of UTP to CTP with either L-glutamine or ammonia as the source of nitrogen. Regulates intracellular CTP levels through interactions with the four ribonucleotide triphosphates. The polypeptide is CTP synthase (Tropheryma whipplei (strain Twist) (Whipple's bacillus)).